The chain runs to 1076 residues: Bifunctional glutamine synthetase adenylyltransferase/adenylyl-removing enzyme (1076 aa).

The segment at 1 to 521 is adenylyl removase; the sequence is MESSIFKPSS…LHLDIYYRPM (521 aa). The adenylyl transferase stretch occupies residues 524–1076; the sequence is VNAQMENDQI…LERNRRRAQR (553 aa). Residues 1042–1056 show a composition bias toward low complexity; it reads TATASAATQQPQTAP. The segment at 1042–1076 is disordered; the sequence is TATASAATQQPQTAPRPRMHVIAPRLERNRRRAQR.

The protein belongs to the GlnE family. It depends on Mg(2+) as a cofactor.

The catalysed reaction is [glutamine synthetase]-O(4)-(5'-adenylyl)-L-tyrosine + phosphate = [glutamine synthetase]-L-tyrosine + ADP. It catalyses the reaction [glutamine synthetase]-L-tyrosine + ATP = [glutamine synthetase]-O(4)-(5'-adenylyl)-L-tyrosine + diphosphate. In terms of biological role, involved in the regulation of glutamine synthetase GlnA, a key enzyme in the process to assimilate ammonia. When cellular nitrogen levels are high, the C-terminal adenylyl transferase (AT) inactivates GlnA by covalent transfer of an adenylyl group from ATP to specific tyrosine residue of GlnA, thus reducing its activity. Conversely, when nitrogen levels are low, the N-terminal adenylyl removase (AR) activates GlnA by removing the adenylyl group by phosphorolysis, increasing its activity. The regulatory region of GlnE binds the signal transduction protein PII (GlnB) which indicates the nitrogen status of the cell. The chain is Bifunctional glutamine synthetase adenylyltransferase/adenylyl-removing enzyme from Bifidobacterium longum (strain NCC 2705).